Here is a 184-residue protein sequence, read N- to C-terminus: MEPFSSKSLALQAEKKLLSKMAGRSVAHLFIDETSSAVLDELYRVSKEYTHSRPQAQRVIKDLIKVAVKVAVLHRSGCFGPSELALAARFRQKLQQGAMTALSFGEVDFTFEAAVLAGLLTECRDMLLELVEHHLTPKSHNRIRHVFDHFSDPGLLTALYGPDFTQHLGKICDGLRKMLDEGKL.

It belongs to the TNFAIP8 family. TNFAIP8L2 subfamily. In terms of assembly, may interact with CASP8; however, such result is unclear since could not reproduce the interaction with CASP8. Interacts with RAC1. In terms of processing, ubiquitinated in a BTRC-depdent manner; leading to degradation mediated through the proteasome pathway.

Its subcellular location is the cytoplasm. It is found in the nucleus. It localises to the lysosome. Functionally, acts as a negative regulator of innate and adaptive immunity by maintaining immune homeostasis. Plays a regulatory role in the Toll-like signaling pathway by determining the strength of LPS-induced signaling and gene expression. Inhibits TCR-mediated T-cell activation and negatively regulate T-cell function to prevent hyperresponsiveness. Also inhibits autolysosome formation via negatively modulating MTOR activation by interacting with RAC1 and promoting the disassociation of the RAC1-MTOR complex. Plays an essential role in NK-cell biology by acting as a checkpoint and displaying an expression pattern correlating with NK-cell maturation process and by negatively regulating NK-cell maturation and antitumor immunity. Mechanistically, suppresses IL-15-triggered mTOR activity in NK-cells. This chain is Tumor necrosis factor alpha-induced protein 8-like protein 2 (TNFAIP8L2), found in Rhinolophus ferrumequinum (Greater horseshoe bat).